Consider the following 770-residue polypeptide: Glutamate carboxypeptidase 2 homolog (770 aa).

Over 1 to 25 the chain is Cytoplasmic; sequence MPYVGVGAQTVSTSLTGAPMVKAYI. The helical; Signal-anchor for type II membrane protein transmembrane segment at 26-42 threads the bilayer; the sequence is AIAASLIFVFCIAALGV. At 43–770 the chain is on the extracellular side; sequence HHSERKFNKF…CVVNTLRDVI (728 aa). N-linked (GlcNAc...) asparagine glycans are attached at residues Asn-175 and Asn-337. A catalytic region spans residues 282–597; it reads SKKELFKGRT…QYWAELAKTF (316 aa). Residues His-387 and Asp-397 each coordinate Zn(2+). N-linked (GlcNAc...) asparagine glycosylation is present at Asn-417. Glu-435 serves as the catalytic Nucleophile. Zn(2+) is bound by residues Glu-436 and Asp-464. N-linked (GlcNAc...) asparagine glycans are attached at residues Asn-469, Asn-546, and Asn-551. His-562 is a binding site for Zn(2+). Asn-579, Asn-606, and Asn-630 each carry an N-linked (GlcNAc...) asparagine glycan.

The protein belongs to the peptidase M28 family. M28B subfamily. Zn(2+) serves as cofactor.

The protein localises to the membrane. It carries out the reaction Release of an unsubstituted, C-terminal glutamyl residue, typically from Ac-Asp-Glu or folylpoly-gamma-glutamates.. This is Glutamate carboxypeptidase 2 homolog from Caenorhabditis elegans.